Reading from the N-terminus, the 500-residue chain is Zinc finger and BTB domain-containing protein 34 (500 aa).

One can recognise a BTB domain in the interval 32–96 (CDIIVHIQGQ…CYTGRMSLQL (65 aa)). Position 164 is a phosphoserine (S164). The interval 164–209 (SPPYCSQGRQPTASSDLRMETTPSKALRSRLQEEGHSDRGSSGSVS) is disordered. The segment covering 193–202 (RLQEEGHSDR) has biased composition (basic and acidic residues). Residues K235 and K237 each participate in a glycyl lysine isopeptide (Lys-Gly) (interchain with G-Cter in SUMO2) cross-link. Positions 236 to 245 (VKMEKSDRPS) are enriched in basic and acidic residues. 2 disordered regions span residues 236–256 (VKME…GDDG) and 341–360 (SDSE…RERS). C2H2-type zinc fingers lie at residues 372–394 (LICI…MRLH) and 400–422 (FVCK…IRGH). Residue K426 forms a Glycyl lysine isopeptide (Lys-Gly) (interchain with G-Cter in SUMO2) linkage. Residues 428–451 (FRCEICGKCFPFQGTLNQHLRKNH) form a C2H2-type 3 zinc finger. The residue at position 463 (S463) is a Phosphoserine. K474 is covalently cross-linked (Glycyl lysine isopeptide (Lys-Gly) (interchain with G-Cter in SUMO2)). The tract at residues 478 to 500 (DASASEMGLDSRMEIHTVSDAPD) is disordered.

Expressed in several tissues, including heart, brain, thymus, skeletal muscle, small intestine, testis, kidney, placenta, peripheral blood cells and adult and fetal liver.

Its subcellular location is the nucleus. Functionally, may be a transcriptional repressor. The sequence is that of Zinc finger and BTB domain-containing protein 34 (ZBTB34) from Homo sapiens (Human).